A 467-amino-acid polypeptide reads, in one-letter code: Transcription factor fos-1 (467 aa).

Over residues 1–22 the composition is skewed to low complexity; the sequence is MFEQPSSTTNTTTSSGSGSDSN. Disordered stretches follow at residues 1 to 38 and 139 to 179; these read MFEQPSSTTNTTTSSGSGSDSNHYFELGPRNPINQAHP and QYST…AAAR. The bZIP domain occupies 163 to 226; that stretch reads DDKRLKRRQR…NSLKNYLETH (64 aa). Residues 165 to 205 are basic motif; the sequence is KRLKRRQRNKEAAARCRQRRIDLMKELQDQVNDFKNSNDKK. A leucine-zipper region spans residues 212-219; that stretch reads IRNKLNSL. Disordered stretches follow at residues 266 to 291 and 395 to 467; these read RADSVPYSIRSGHSSSSSEQHSPVED and QPIT…LRPL. Residues 273–286 are compositionally biased toward low complexity; it reads SIRSGHSSSSSEQH. Over residues 434-454 the composition is skewed to polar residues; that stretch reads SSNTGLTPSGQPTMNFVSTPT. Thr-440, Thr-452, and Thr-454 each carry phosphothreonine.

Belongs to the bZIP family. Fos subfamily. Homodimer. Heterodimer; with jun-1. Interacts with kgb-1 and hda-1. May be phosphorylated by kgb-1. Phosphorylation at Thr-440 increases sensitivity to heavy metal stress. Phosphorylation inhibits homodimer formation, and promotes association with target promoters. In terms of tissue distribution, expressed in anchor cells. Isoform a is expressed in somatic gonad cells that neighbor anchor cells. Isoform b is expressed in vulval cells, the uterine cells that neighbor anchor cells and the spermatheca.

The protein localises to the nucleus. In terms of biological role, developmentally regulated transcription factor which binds and recognizes the enhancer DNA sequence 5'-TGA[CG]TCA-3'. Functionally, plays a role the development of the reproductive system, controlling events including anchor cell (AC) fusion and invasion. Regulates downstream transcriptional targets, including zmp-1, cdh-3, him-4 and mig10b, to promote the removal of the gonadal basement membrane during AC invasion. Regulates aff-1 expression to promote AC fusion. With jun-1 regulates egl-1 and lin-12 expression to allow uterine cell specification and development. Required for ovulation. Controls plc-1 expression in the spermatheca to regulate spermathecal valve dilation. Acts with hda-1 as a downstream repressor of the kgb-1 mediated stress response pathway that transcriptionally represses genes involved in the response to heavy metals, such as kreg-1. The chain is Transcription factor fos-1 from Caenorhabditis elegans.